The chain runs to 387 residues: Flap endonuclease 1 (387 aa).

Positions 1 to 104 are N-domain; the sequence is MGIKGLSQLI…GELEKRKERQ (104 aa). D34 is a Mg(2+) binding site. R70 lines the DNA pocket. Residues D86, E158, E160, D179, and D181 each coordinate Mg(2+). The interval 122-253 is I-domain; that stretch reads KMVMWNKRTT…KKALAMIKKY (132 aa). Position 158 (E158) interacts with DNA. 2 residues coordinate DNA: G231 and D233. Position 233 (D233) interacts with Mg(2+). The interval 332-387 is disordered; it reads SSRGKPTQTRLDGFFTPVASSSTTKKKAPAKKDDKKSATDKKRKAADASTSSKKKK. Positions 338-346 are interaction with PCNA; the sequence is TQTRLDGFF. A compositionally biased stretch (basic and acidic residues) spans 361 to 371; the sequence is AKKDDKKSATD. Over residues 378-387 the composition is skewed to low complexity; it reads DASTSSKKKK.

The protein belongs to the XPG/RAD2 endonuclease family. FEN1 subfamily. As to quaternary structure, interacts with PCNA. Three molecules of FEN1 bind to one PCNA trimer with each molecule binding to one PCNA monomer. PCNA stimulates the nuclease activity without altering cleavage specificity. The cofactor is Mg(2+). Post-translationally, phosphorylated. Phosphorylation upon DNA damage induces relocalization to the nuclear plasma.

It localises to the nucleus. Its subcellular location is the nucleolus. The protein resides in the nucleoplasm. The protein localises to the mitochondrion. Its function is as follows. Structure-specific nuclease with 5'-flap endonuclease and 5'-3' exonuclease activities involved in DNA replication and repair. During DNA replication, cleaves the 5'-overhanging flap structure that is generated by displacement synthesis when DNA polymerase encounters the 5'-end of a downstream Okazaki fragment. It enters the flap from the 5'-end and then tracks to cleave the flap base, leaving a nick for ligation. Also involved in the long patch base excision repair (LP-BER) pathway, by cleaving within the apurinic/apyrimidinic (AP) site-terminated flap. Acts as a genome stabilization factor that prevents flaps from equilibrating into structures that lead to duplications and deletions. Also possesses 5'-3' exonuclease activity on nicked or gapped double-stranded DNA, and exhibits RNase H activity. Also involved in replication and repair of rDNA and in repairing mitochondrial DNA. The polypeptide is Flap endonuclease 1 (Naegleria gruberi (Amoeba)).